Reading from the N-terminus, the 84-residue chain is Large ribosomal subunit protein bL31 (84 aa).

Residues C16, C18, C38, and C41 each contribute to the Zn(2+) site.

This sequence belongs to the bacterial ribosomal protein bL31 family. Type A subfamily. In terms of assembly, part of the 50S ribosomal subunit. The cofactor is Zn(2+).

Functionally, binds the 23S rRNA. In Mycobacterium leprae (strain Br4923), this protein is Large ribosomal subunit protein bL31.